The following is a 327-amino-acid chain: Putative HTH-type transcriptional regulatory protein Mbar_A2318 (327 aa).

An HTH cro/C1-type domain is found at 132–190 (LKKARMGQSMSLGTLASMVGVSRRTISKYEEEGMDASIDVVLQLEDIFGVELAKPINIL). Positions 143 to 162 (LGTLASMVGVSRRTISKYEE) form a DNA-binding region, H-T-H motif.

This Methanosarcina barkeri (strain Fusaro / DSM 804) protein is Putative HTH-type transcriptional regulatory protein Mbar_A2318.